The following is a 551-amino-acid chain: Cleavage and polyadenylation specificity factor subunit 6 (551 aa).

Positions 1–213 (MADGVDHIDI…RGRFPGAVPG (213 aa)) are necessary for interaction with NXF1. Residues 81 to 161 (IALYIGNLTW…QNPVVTPCNK (81 aa)) enclose the RRM domain. Positions 81 to 161 (IALYIGNLTW…QNPVVTPCNK (81 aa)) are necessary for interaction with NUDT21/CPSF5. The segment at 81-161 (IALYIGNLTW…QNPVVTPCNK (81 aa)) is necessary for nuclear paraspeckles localization. Threonine 157 carries the post-translational modification Phosphothreonine. Residues 169-180 (MQSRKTTQSGQM) are compositionally biased toward polar residues. Disordered regions lie at residues 169–411 (MQSR…PLSE) and 477–551 (LHGI…YRHR). The GAR motif lies at 202 to 206 (RGRGR). Positions 207–219 (FPGAVPGGDRFPG) are enriched in low complexity. 3 stretches are compositionally biased toward pro residues: residues 220 to 265 (PAGP…PLAG), 285 to 366 (GQPP…PPPT), and 377 to 388 (GPPPTDPYGRPP). The span at 389-404 (PYDRGDYGPPGREMDT) shows a compositional bias: basic and acidic residues. Residues threonine 404 and threonine 407 each carry the phosphothreonine modification. The tract at residues 404 to 551 (TARTPLSEAE…RDREREYRHR (148 aa)) is sufficient for nuclear speckle localization. Residues 405-551 (ARTPLSEAEF…RDREREYRHR (147 aa)) are necessary for RNA-binding. The interval 481–551 (ESKSYGSGSR…RDREREYRHR (71 aa)) is necessary for interaction with SRSF3, SRSF7 and TRA2B/SFRS10. A compositionally biased stretch (basic and acidic residues) spans 489–503 (SRRERSRERDHSRSR). An arg/Ser-rich domain region spans residues 490-551 (RRERSRERDH…RDREREYRHR (62 aa)). Phosphoserine is present on residues serine 494, serine 500, serine 511, serine 513, and serine 525. Basic residues predominate over residues 504–514 (EKSRRHKSRSR). Positions 510–551 (KSRSRDRHDDYYRERSRERERHRDRDRDRDRERDREREYRHR) are sufficient for nuclear targeting. A compositionally biased stretch (basic and acidic residues) spans 515–551 (DRHDDYYRERSRERERHRDRDRDRDRERDREREYRHR).

The protein belongs to the RRM CPSF6/7 family. As to quaternary structure, component of the cleavage factor Im (CFIm) complex which is a heterotetramer composed of two subunits of NUDT21/CPSF5 and two subunits of CPSF6 or CPSF7 or a heterodimer of CPSF6 and CPSF7. The cleavage factor Im (CFIm) complex associates with the CPSF and CSTF complexes to promote the assembly of the core mRNA 3'-processing machinery. Associates with the exon junction complex (EJC). Associates with the 80S ribosome particle. Interacts (via the RRM domain) with NUDT21/CPSF5; this interaction is direct and enhances binding to RNA. Interacts (via Arg/Ser-rich domain) with FIP1L1 (preferentially via unphosphorylated form and Arg/Glu/Asp-rich domain); this interaction mediates, at least in part, the interaction between the CFIm and CPSF complexes and may be inhibited by CPSF6 hyper-phosphorylation. Interacts (via N-terminus) with NXF1; this interaction is direct. Interacts with SRSF3. Interacts with SRSF7. Interacts with SNRNP70. Interacts with TRA2B/SFRS10. Interacts with UPF1. Interacts with UPF3B. Interacts with VIRMA. Interacts (via Arg/Ser-rich domain) with TNPO3; promoting nuclear import of CPSF6 independently of its phosphorylation status. Interacts with YTHDC1. In terms of processing, phosphorylated. Phosphorylated in the Arg/Ser-rich domain by SRPK1, in vitro. Symmetrically dimethylated on arginine residues in the GAR motif by PRMT5 in a WDR77- and CLNS1A-dependent manner. Asymmetrically dimethylated on arginine residues in the GAR motif by PRMT1.

Its subcellular location is the nucleus. It localises to the nucleoplasm. The protein resides in the nucleus speckle. The protein localises to the cytoplasm. Functionally, component of the cleavage factor Im (CFIm) complex that functions as an activator of the pre-mRNA 3'-end cleavage and polyadenylation processing required for the maturation of pre-mRNA into functional mRNAs. CFIm contributes to the recruitment of multiprotein complexes on specific sequences on the pre-mRNA 3'-end, so called cleavage and polyadenylation signals (pA signals). Most pre-mRNAs contain multiple pA signals, resulting in alternative cleavage and polyadenylation (APA) producing mRNAs with variable 3'-end formation. The CFIm complex acts as a key regulator of cleavage and polyadenylation site choice during APA through its binding to 5'-UGUA-3' elements localized in the 3'-untranslated region (UTR) for a huge number of pre-mRNAs. CPSF6 enhances NUDT21/CPSF5 binding to 5'-UGUA-3' elements localized upstream of pA signals and promotes RNA looping, and hence activates directly the mRNA 3'-processing machinery. Plays a role in mRNA export. The polypeptide is Cleavage and polyadenylation specificity factor subunit 6 (Bos taurus (Bovine)).